We begin with the raw amino-acid sequence, 444 residues long: ATP-dependent protease ATPase subunit HslU (444 aa).

Residues Ile-18, 60-65 (GVGKTE), Asp-256, Glu-322, and Arg-394 each bind ATP.

This sequence belongs to the ClpX chaperone family. HslU subfamily. In terms of assembly, a double ring-shaped homohexamer of HslV is capped on each side by a ring-shaped HslU homohexamer. The assembly of the HslU/HslV complex is dependent on binding of ATP.

The protein resides in the cytoplasm. In terms of biological role, ATPase subunit of a proteasome-like degradation complex; this subunit has chaperone activity. The binding of ATP and its subsequent hydrolysis by HslU are essential for unfolding of protein substrates subsequently hydrolyzed by HslV. HslU recognizes the N-terminal part of its protein substrates and unfolds these before they are guided to HslV for hydrolysis. The chain is ATP-dependent protease ATPase subunit HslU from Serratia proteamaculans (strain 568).